The primary structure comprises 1079 residues: Integrator complex subunit 3 homolog (1079 aa).

Disordered regions lie at residues E544 to P574, Y925 to A949, and A1010 to D1079. Low complexity predominate over residues K938 to A949. Phosphoserine is present on residues S1049, S1050, S1054, and S1055. Over residues H1062 to K1073 the composition is skewed to basic residues.

This sequence belongs to the Integrator subunit 3 family. In terms of assembly, belongs to the multiprotein complex Integrator, at least composed of IntS1, IntS2, IntS3, IntS4, omd/IntS5, IntS6, defl/IntS7, IntS8, IntS9, IntS10, IntS11, IntS12, asun/IntS13, IntS14 and IntS15. The core complex associates with protein phosphatase 2A subunits mts/PP2A and Pp2A-29B, to form the Integrator-PP2A (INTAC) complex.

The protein localises to the nucleus. It is found in the cytoplasm. In terms of biological role, component of the integrator complex, a multiprotein complex that terminates RNA polymerase II (Pol II) transcription in the promoter-proximal region of genes. The integrator complex provides a quality checkpoint during transcription elongation by driving premature transcription termination of transcripts that are unfavorably configured for transcriptional elongation: the complex terminates transcription by (1) catalyzing dephosphorylation of the C-terminal domain (CTD) of Pol II subunit Polr2A/Rbp1 and Spt5, and (2) degrading the exiting nascent RNA transcript via endonuclease activity. The integrator complex is also involved in the 3'-end processing of the U7 snRNA, and also the spliceosomal snRNAs U1, U2, U4 and U5. This chain is Integrator complex subunit 3 homolog (IntS3), found in Drosophila mojavensis (Fruit fly).